A 164-amino-acid chain; its full sequence is MERFLENVMYASRWLLAPVYFGLSLALIALALKFFQEILHVLPNVFALAEADLILVLLSLVDMTLVGGLLVMVMFSGYENFVSQLDISAGKEKLNWLGKMDATSLKNKVAASIVAISSIHLLRVFMDAKNVPDNKLMWYVIIHLTFVLSAFVMGYLDRLTRHNH.

3 helical membrane passes run 15–35 (LLAPVYFGLSLALIALALKFF), 53–73 (LILVLLSLVDMTLVGGLLVMV), and 136–156 (LMWYVIIHLTFVLSAFVMGYL).

Belongs to the UPF0114 family.

The protein resides in the cell membrane. This is UPF0114 protein YqhA from Salmonella agona (strain SL483).